The sequence spans 46 residues: Esculentin-1R (46 aa).

Residues Cys40 and Cys46 are joined by a disulfide bond.

Expressed by the skin glands.

The protein localises to the secreted. In terms of biological role, shows antibacterial activity against representative Gram-negative and Gram-positive bacterial species, and hemolytic activity. This Pelophylax ridibundus (Marsh frog) protein is Esculentin-1R.